The following is a 1411-amino-acid chain: ATP-dependent permease PDR11 (1411 aa).

Residues Ser2 to Gln388 lie on the Cytoplasmic side of the membrane. Positions Val31–Asn273 constitute an ABC transporter 1 domain. The helical transmembrane segment at Phe389 to Thr409 threads the bilayer. The Extracellular portion of the chain corresponds to Thr410 to Ser418. Residues Leu419–Phe439 traverse the membrane as a helical segment. The Cytoplasmic segment spans residues Gln440 to Lys471. A helical transmembrane segment spans residues Phe472–Ala492. Topologically, residues Ala493–Arg494 are extracellular. Residues Phe495–Leu515 form a helical membrane-spanning segment. At Thr516 to Ser524 the chain is on the cytoplasmic side. A helical transmembrane segment spans residues Met525–Ile545. Over Tyr546–Phe636 the chain is Extracellular. The N-linked (GlcNAc...) asparagine glycan is linked to Asn595. A helical membrane pass occupies residues Gly637–Ile657. Topologically, residues Thr658 to Thr1090 are cytoplasmic. The region spanning Ile751–Phe979 is the ABC transporter 2 domain. Gly782–Thr789 serves as a coordination point for ATP. A helical transmembrane segment spans residues Tyr1091 to Trp1111. The Extracellular segment spans residues Arg1112–Ile1117. A helical membrane pass occupies residues Asn1118 to Ile1138. The Cytoplasmic segment spans residues Asn1139–Glu1175. A helical transmembrane segment spans residues Leu1176 to Phe1196. The Extracellular segment spans residues Glu1197–Gly1204. The helical transmembrane segment at Val1205–Leu1225 threads the bilayer. Topologically, residues Tyr1226 to Asp1230 are cytoplasmic. A helical membrane pass occupies residues Leu1231–Val1251. Residues Met1252–Asn1355 are Extracellular-facing. N-linked (GlcNAc...) asparagine glycans are attached at residues Asn1289, Asn1324, and Asn1346. The chain crosses the membrane as a helical span at residues Phe1356–Leu1376. Over Thr1377–Val1411 the chain is Cytoplasmic.

The protein belongs to the ABC transporter superfamily. ABCG family. PDR (TC 3.A.1.205) subfamily.

Its subcellular location is the membrane. Transporter involved in the uptake of sterol. The polypeptide is ATP-dependent permease PDR11 (PDR11) (Saccharomyces cerevisiae (strain ATCC 204508 / S288c) (Baker's yeast)).